Here is a 264-residue protein sequence, read N- to C-terminus: uncharacterized protein (264 aa).

Residues 1–23 form the signal peptide; the sequence is MQQWNLTISNILIGLFFCFSAQA.

This is an uncharacterized protein from Shewanella oneidensis (strain ATCC 700550 / JCM 31522 / CIP 106686 / LMG 19005 / NCIMB 14063 / MR-1).